The following is a 161-amino-acid chain: MIDRIPMSVRGNKKLKEELLRLTRVERLDVVKAIEVAREHGDLKENAEYHAAKERQGMIEARIMDLKDKLGRAEVIDCLQVSCKRVVFGTVVVLLDLDTDEEVTYQLLGPEESEVKAGSISVLSPIGRSMLSKEEGDEVVTKTPGGTREFEVVEIKTGDFA.

This sequence belongs to the GreA/GreB family.

Functionally, necessary for efficient RNA polymerase transcription elongation past template-encoded arresting sites. The arresting sites in DNA have the property of trapping a certain fraction of elongating RNA polymerases that pass through, resulting in locked ternary complexes. Cleavage of the nascent transcript by cleavage factors such as GreA or GreB allows the resumption of elongation from the new 3'terminus. GreA releases sequences of 2 to 3 nucleotides. This chain is Transcription elongation factor GreA, found in Desulfotalea psychrophila (strain LSv54 / DSM 12343).